The primary structure comprises 87 residues: MYTSASLFFIQIVISIFNSHLAVLYSIALCYSVQGRILGSSTTNFVHDSTIGVKSSWSRHLIHGINIFSFSISLFLIFLTIPLFDIG.

Helical transmembrane passes span leucine 7 to isoleucine 27 and glycine 64 to phenylalanine 84.

The protein localises to the membrane. This is an uncharacterized protein from Schizosaccharomyces pombe (strain 972 / ATCC 24843) (Fission yeast).